The sequence spans 165 residues: Pyruvoyl-dependent arginine decarboxylase (165 aa).

Ser-53 is modified (pyruvic acid (Ser)).

This sequence belongs to the PdaD family. As to quaternary structure, trimer of an alpha-beta dimer. The cofactor is pyruvate.

The enzyme catalyses L-arginine + H(+) = agmatine + CO2. This is Pyruvoyl-dependent arginine decarboxylase (pdaD) from Methanocaldococcus jannaschii (strain ATCC 43067 / DSM 2661 / JAL-1 / JCM 10045 / NBRC 100440) (Methanococcus jannaschii).